Reading from the N-terminus, the 279-residue chain is Dihydropteroate synthase type-1 (279 aa).

The 258-residue stretch at 1-258 (MVTVFGILNL…APGDLRSAIT (258 aa)) folds into the Pterin-binding domain. Asparagine 9 contacts Mg(2+). Residues aspartate 82, asparagine 101, aspartate 173, lysine 212, and 246 to 248 (RTH) contribute to the (7,8-dihydropterin-6-yl)methyl diphosphate site.

This sequence belongs to the DHPS family. As to quaternary structure, homodimer or homotrimer. Mg(2+) is required as a cofactor.

It carries out the reaction (7,8-dihydropterin-6-yl)methyl diphosphate + 4-aminobenzoate = 7,8-dihydropteroate + diphosphate. Its pathway is cofactor biosynthesis; tetrahydrofolate biosynthesis; 7,8-dihydrofolate from 2-amino-4-hydroxy-6-hydroxymethyl-7,8-dihydropteridine diphosphate and 4-aminobenzoate: step 1/2. In terms of biological role, catalyzes the condensation of para-aminobenzoate (pABA) with 6-hydroxymethyl-7,8-dihydropterin diphosphate (DHPt-PP) to form 7,8-dihydropteroate (H2Pte), the immediate precursor of folate derivatives. In Corynebacterium glutamicum (Brevibacterium saccharolyticum), this protein is Dihydropteroate synthase type-1 (sulI).